A 310-amino-acid chain; its full sequence is tRNA-5-methyluridine(54) 2-sulfurtransferase (310 aa).

Zn(2+) is bound by residues cysteine 3, cysteine 6, cysteine 22, and histidine 25. Alanine 53 and isoleucine 79 together coordinate ATP. [4Fe-4S] cluster is bound by residues cysteine 128 and cysteine 131. Cysteine 128 and cysteine 220 are oxidised to a cystine. Residues lysine 135 and glycine 154 each coordinate ATP. Cysteine 220 is a binding site for [4Fe-4S] cluster. Zn(2+)-binding residues include cysteine 272, cysteine 275, cysteine 284, and cysteine 287.

It belongs to the TtcA family. TtuA subfamily. As to quaternary structure, homodimer. It depends on [4Fe-4S] cluster as a cofactor. Mg(2+) serves as cofactor.

It catalyses the reaction 5-methyluridine(54) in tRNA + hydrogen sulfide + ATP = 5-methyl-2-thiouridine(54) in tRNA + AMP + diphosphate. The protein operates within tRNA modification. Functionally, catalyzes the ATP-dependent 2-thiolation of 5-methyluridine residue at position 54 in the T loop of tRNAs, leading to 5-methyl-2-thiouridine (m(5)s(2)U or s(2)T). This modification allows thermal stabilization of tRNAs in thermophilic microorganisms, and is required for cell growth at high temperatures. Can use free sulfide as sulfur source in vitro, which may be also the sulfur source in vivo. This Pyrococcus horikoshii (strain ATCC 700860 / DSM 12428 / JCM 9974 / NBRC 100139 / OT-3) protein is tRNA-5-methyluridine(54) 2-sulfurtransferase.